The following is a 146-amino-acid chain: UPF0260 protein Sama_1927 (146 aa).

It belongs to the UPF0260 family.

The polypeptide is UPF0260 protein Sama_1927 (Shewanella amazonensis (strain ATCC BAA-1098 / SB2B)).